Here is a 357-residue protein sequence, read N- to C-terminus: MKEKTRVAILYGGRSAEHDVSRLSAANVLKAIDRTRYEVVPIAISRDGRWRLQPSSEAGADGAGAQVPEDGVEVALLPGGKGRLVALTKNGEQPDPVDVVFPVLHGPFGEDGSVQGYAEVADVAYVGCGILASAAAMDKDVAKRLLREAGLAVARSVTVLKGDVGSFQEIAGALGLPFFAKPARQGSSFGVSKVHDRDGFEQAVETALRYDSKALIEEFVDGREIECSVLERADGSLTVSPPGEIIPADKHGFYTYEAKYFDAEGAVVKVPADVPADVVARTSEMAARAFRALGCEAMARVDFFLRADGSLLVNEVNTLPGFTDISMYAKALAAAGIGYSKVIDVLIEHALARHRAR.

The region spanning Lys-143 to Glu-348 is the ATP-grasp domain. Ala-171–Glu-226 lines the ATP pocket. 3 residues coordinate Mg(2+): Asp-302, Glu-315, and Asn-317.

The protein belongs to the D-alanine--D-alanine ligase family. Mg(2+) is required as a cofactor. It depends on Mn(2+) as a cofactor.

The protein resides in the cytoplasm. The catalysed reaction is 2 D-alanine + ATP = D-alanyl-D-alanine + ADP + phosphate + H(+). Its pathway is cell wall biogenesis; peptidoglycan biosynthesis. Cell wall formation. The chain is D-alanine--D-alanine ligase A from Mesorhizobium japonicum (strain LMG 29417 / CECT 9101 / MAFF 303099) (Mesorhizobium loti (strain MAFF 303099)).